The following is a 140-amino-acid chain: Ribosome-binding factor A (140 aa).

Basic and acidic residues predominate over residues 118–133 (DEAKQQKHNGKDKTDT). A disordered region spans residues 118 to 140 (DEAKQQKHNGKDKTDTADSEGEE).

Belongs to the RbfA family. As to quaternary structure, monomer. Binds 30S ribosomal subunits, but not 50S ribosomal subunits or 70S ribosomes.

It is found in the cytoplasm. In terms of biological role, one of several proteins that assist in the late maturation steps of the functional core of the 30S ribosomal subunit. Associates with free 30S ribosomal subunits (but not with 30S subunits that are part of 70S ribosomes or polysomes). Required for efficient processing of 16S rRNA. May interact with the 5'-terminal helix region of 16S rRNA. This chain is Ribosome-binding factor A, found in Shewanella woodyi (strain ATCC 51908 / MS32).